The following is a 408-amino-acid chain: uncharacterized protein (408 aa).

4Fe-4S ferredoxin-type domains are found at residues 42-72, 78-107, 122-151, 151-181, 212-241, 233-265, 273-302, and 304-333; these read IPPIVKFPEKCISCEGCKESCPAFAIEMIYN, KLPVIDEGSCVACANCIEVCPTGVLEMDKH, SNLIIDEEVCVRCGNCERACPINVIERKEG, GKYVINMALCISCKECIKVCPIENAIVVVDE, KIPHIVSGLCVSCGICKDVCVGEIDLNEKK, GEIDLNEKKVVECVKCGLCIEVCSTTAIRIYKP, ICYVIDEDLCIGCRICQKVCGSGAIKISKE, and KLPYIVPELCVRGGACARECPVGAIKVVKP. Cys52, Cys55, Cys58, Cys62, Cys87, Cys90, Cys93, Cys97, Cys131, Cys134, Cys137, Cys141, Cys160, Cys163, Cys166, and Cys170 together coordinate [4Fe-4S] cluster. Residues Cys282, Cys285, Cys288, and Cys292 each contribute to the [4Fe-4S] cluster site.

This is an uncharacterized protein from Methanocaldococcus jannaschii (strain ATCC 43067 / DSM 2661 / JAL-1 / JCM 10045 / NBRC 100440) (Methanococcus jannaschii).